Consider the following 508-residue polypeptide: GMP synthase [glutamine-hydrolyzing] (508 aa).

One can recognise a Glutamine amidotransferase type-1 domain in the interval 1–189 (MILVLDFGSQ…ALLVCDCEKT (189 aa)). Cys78 functions as the Nucleophile in the catalytic mechanism. Catalysis depends on residues His163 and Glu165. The region spanning 190–383 (WGMQHFAQRE…LGISQDFLMR (194 aa)) is the GMPS ATP-PPase domain. 217–223 (SGGVDST) serves as a coordination point for ATP.

In terms of assembly, homodimer.

The enzyme catalyses XMP + L-glutamine + ATP + H2O = GMP + L-glutamate + AMP + diphosphate + 2 H(+). Its pathway is purine metabolism; GMP biosynthesis; GMP from XMP (L-Gln route): step 1/1. Catalyzes the synthesis of GMP from XMP. In Helicobacter pylori (strain HPAG1), this protein is GMP synthase [glutamine-hydrolyzing].